Reading from the N-terminus, the 172-residue chain is Small ribosomal subunit protein uS5 (172 aa).

In terms of domain architecture, S5 DRBM spans 17 to 80 (MREKMIAVNR…EECRRNLVKV (64 aa)).

It belongs to the universal ribosomal protein uS5 family. In terms of assembly, part of the 30S ribosomal subunit. Contacts proteins S4 and S8.

In terms of biological role, with S4 and S12 plays an important role in translational accuracy. Located at the back of the 30S subunit body where it stabilizes the conformation of the head with respect to the body. The sequence is that of Small ribosomal subunit protein uS5 from Paracidovorax citrulli (strain AAC00-1) (Acidovorax citrulli).